A 1392-amino-acid chain; its full sequence is DNA-directed RNA polymerase subunit beta'' (1392 aa).

The Zn(2+) site is built by C224, C295, C302, and C305.

It belongs to the RNA polymerase beta' chain family. RpoC2 subfamily. In terms of assembly, in plastids the minimal PEP RNA polymerase catalytic core is composed of four subunits: alpha, beta, beta', and beta''. When a (nuclear-encoded) sigma factor is associated with the core the holoenzyme is formed, which can initiate transcription. It depends on Zn(2+) as a cofactor.

The protein resides in the plastid. It localises to the chloroplast. The enzyme catalyses RNA(n) + a ribonucleoside 5'-triphosphate = RNA(n+1) + diphosphate. DNA-dependent RNA polymerase catalyzes the transcription of DNA into RNA using the four ribonucleoside triphosphates as substrates. The polypeptide is DNA-directed RNA polymerase subunit beta'' (Solanum bulbocastanum (Wild potato)).